A 310-amino-acid chain; its full sequence is MNLQDDQTSADLFQVATFYSFTAWPEVTITCLLQDLLSLGDEHQLMGTVLLAEEGVNGTICGSVDGVSALLERLERDLIEGLFELKISWTPEQAFRRFKVRRKAEIVTMGLAGLNPSKTVGTYVDAHEWNDLIDDPDTLLIDTRNDYEIAIGEFKGAINPQTKCFRDFPAWVEQQLRSMVKAKTSARIAMYCTGGIRCEKATSYLIEKGFTNVHHLRGGILRYFEEVSQSESRWQGECFVFDQRVALNHQLSPGVYRLCHACGMPLTPEDQAMNSYRTGVQCRHCVDQFSDTDRIRFAERQRQMEHSSRK.

Residues 134–232 form the Rhodanese domain; it reads DDPDTLLIDT…YFEEVSQSES (99 aa). Cys192 acts as the Cysteine persulfide intermediate in catalysis.

The protein belongs to the TrhO family.

The enzyme catalyses uridine(34) in tRNA + AH2 + O2 = 5-hydroxyuridine(34) in tRNA + A + H2O. In terms of biological role, catalyzes oxygen-dependent 5-hydroxyuridine (ho5U) modification at position 34 in tRNAs. The chain is tRNA uridine(34) hydroxylase from Prochlorococcus marinus (strain MIT 9303).